Reading from the N-terminus, the 545-residue chain is Chaperonin GroEL 1 (545 aa).

ATP-binding positions include 30–33 (TLGP), Lys-51, 87–91 (DGTTT), Gly-415, and Asp-496.

Belongs to the chaperonin (HSP60) family. As to quaternary structure, forms a cylinder of 14 subunits composed of two heptameric rings stacked back-to-back. Interacts with the co-chaperonin GroES.

The protein localises to the cytoplasm. It carries out the reaction ATP + H2O + a folded polypeptide = ADP + phosphate + an unfolded polypeptide.. Its function is as follows. Together with its co-chaperonin GroES, plays an essential role in assisting protein folding. The GroEL-GroES system forms a nano-cage that allows encapsulation of the non-native substrate proteins and provides a physical environment optimized to promote and accelerate protein folding. This chain is Chaperonin GroEL 1, found in Nitrobacter hamburgensis (strain DSM 10229 / NCIMB 13809 / X14).